A 182-amino-acid chain; its full sequence is Large ribosomal subunit protein uL5 (182 aa).

This sequence belongs to the universal ribosomal protein uL5 family. In terms of assembly, part of the 50S ribosomal subunit; part of the 5S rRNA/L5/L18/L25 subcomplex. Contacts the 5S rRNA and the P site tRNA. Forms a bridge to the 30S subunit in the 70S ribosome.

In terms of biological role, this is one of the proteins that bind and probably mediate the attachment of the 5S RNA into the large ribosomal subunit, where it forms part of the central protuberance. In the 70S ribosome it contacts protein S13 of the 30S subunit (bridge B1b), connecting the 2 subunits; this bridge is implicated in subunit movement. Contacts the P site tRNA; the 5S rRNA and some of its associated proteins might help stabilize positioning of ribosome-bound tRNAs. In Coxiella burnetii (strain CbuK_Q154) (Coxiella burnetii (strain Q154)), this protein is Large ribosomal subunit protein uL5.